A 522-amino-acid polypeptide reads, in one-letter code: DNA damage-binding protein CMR1 (522 aa).

The tract at residues 38–100 (AGVLEKSRAP…DNQLLKMGSP (63 aa)) is disordered. Over residues 54 to 63 (TTNTRATKSA) the composition is skewed to polar residues. Ser-64 is subject to Phosphoserine. The residue at position 69 (Thr-69) is a Phosphothreonine. Basic and acidic residues predominate over residues 75-84 (LRGESADDVK). WD repeat units follow at residues 183-224 (ITYE…LADS), 239-281 (LFTK…EVLT), 287-327 (DDSL…SEYN), 331-371 (LADK…KKPE), 388-427 (DSRL…HLSA), 442-481 (GRWT…LAHL), and 482-521 (PTAT…IKQE). Ser-224 carries the post-translational modification Phosphoserine.

This sequence belongs to the WD repeat DDB2/WDR76 family.

Its subcellular location is the cytoplasm. It localises to the nucleus. Functionally, DNA-binding protein that binds to both single- and double-stranded DNA. Binds preferentially to UV-damaged DNA in vitro. May be involved in DNA-metabolic processes. The protein is DNA damage-binding protein CMR1 of Saccharomyces cerevisiae (strain ATCC 204508 / S288c) (Baker's yeast).